The chain runs to 594 residues: DELLA protein 1 (594 aa).

Residues Met1 to Cys36 are disordered. A compositionally biased stretch (low complexity) spans Ser15–Asn30. A DELLA motif motif is present at residues Asp61–Ala65. A GRAS domain is found at Val207 to Lys587. Residues Val214–Ile268 are leucine repeat I (LRI). Residues Leu216 to Met253 are required for possible homodimerization. A LxCxE motif; degenerate motif is present at residues Met221 to Glu225. Positions His285–Gly350 are VHIID. A VHIID motif is present at residues Val316–Asp320. Residues Gln364–Asn396 are leucine repeat II (LRII). The segment at Val406–Asn508 is PFYRE. Positions Leu414–Leu418 match the LXXLL motif; degenerate motif. Residues Ala511 to Lys587 form an SAW region.

It belongs to the GRAS family. DELLA subfamily. In terms of assembly, may be a homodimer. Ubiquitinated. Upon GA application it is ubiquitinated, leading to its subsequent degradation. As to expression, strongly expressed in the vascular tissue and endodermis but barely in the inner cortical cells where arbuscule are formed during arbuscular mycorrhizal (AM) symbiosis.

It is found in the nucleus. Functionally, probable transcriptional regulator that acts as a repressor of the gibberellin (GA) signaling pathway. Probably acts by participating in large multiprotein complexes that repress transcription of GA-inducible genes. Upon GA application, it is degraded by the proteasome, allowing the GA signaling pathway. Together with DELLA2, required to enable arbuscule development during arbuscular mycorrhizal (AM) symbiosis with AM fungi (e.g. Glomus versiforme) via the regulation of RAM1 which, in turn, regulates various AM genes (e.g. NSP1, NSP2, PT4, LEC5, RAM2, EXO70I, STR and RAD1). The polypeptide is DELLA protein 1 (Medicago truncatula (Barrel medic)).